A 20-amino-acid polypeptide reads, in one-letter code: Toxin b subunit beta (20 aa).

Toxin b is a heterodimer composed of toxin alpha and toxin beta. Expressed by the venom gland.

The protein localises to the secreted. Binds to sodium channels (Nav) and affects the channel activation process. The chain is Toxin b subunit beta from Androctonus crassicauda (Arabian fat-tailed scorpion).